Reading from the N-terminus, the 1209-residue chain is MVDVNRFKSMQITLASPNKVRSWSYGEVKKPETINYRTLKPEREGLFDEVIFGPTKDWECACGKYKRIRYKGIVCDRCGVEVTRAKVRRERMGHIELKAPVSHIWYFKGIPSRMGLTLDMSPRALEEVIYFAAYVVIDPKETPLEAKSLLTEREYREKLQEYGSGSFIAKMGAEAIQDLLKRVDLDAEIAELKEELKTASGQKRVKAIRRLDVLDAFQKSGNKPEWMVLNILPVIPPDLRPMLQLDGGRFATSDLNDLYRRVINRNNRLARLLELNAPGIIVQNEKRMLQEAVDALIDNGRRGRPITGPGSRPLKSLSQMLKGKQGRFRQNLLGKRVDFSGRSVIAVGPTLKMYQCGVPREMAIELFKPFVMREIVDRDIVQNVKAAKRLIERGDDRIWDILEEVIKEHPVLLNRAPTLHRLGIQAFEPVLIDGKALRLHPLACEAYNADFDGDQMAIHVPLSEEAQAEARLLMLAAEHILNPKDGKPVVTPSQDMVLGNYYLTMEGADREGEGMVFKDRDEAVMAYRNGYVHLHSRVGIAVDSMPNKPWTDEQRHKIMITTVGKILFNDIMPADLPYLQEPNNANLTDKTPDKYFLAPGSNIQEAIKNLDLNIPFKKKNLGNIIAEIFKRFRTTETSAFLDRLKDLGYYHSTLAGLTVGIADIPVIDNKQEIIDAAHHRVEEISKAFRRGLMTDDDRYEAVTATWRDAKEQLEARLVETQDAKNPIVMMMDSGARGNISNFSQLAGMRGLMAAPNGRIMELPILSNFREGLSVLEMFFSTHGARKGMTDTALKTADSGYLTRRLVDVAQDVIIREDDCGTDRGLTITAITDGKEVTETLEERLVGRYTKKSVRHPETGEIIASPDTLITEDMAHYIAEAGVSEVTIRSVFTCNTRHGVCRHCYGINLATGDAVEVGEAVGTIAAQSIGEPGTQLTMRTFHTGGVASNADITQGLPRIQEIFEARNPKGEAVITEVKGQVTDIEEDAATRTKKVYVKGATGEGEYTVPFTARMKVQVGDEVHRGAPLTEGSIQPKHLLEVRDTLSVETYLLAEVQKVYRSQGVEIGDKHVEVMVRQMLRKVRVMDPGDTGLLPGILMDIADFTDANRDIVIAGGIPATSRPVLMGITKASLETNSFLSAASFQETTRVLTDAAIRGKKDHLLGLKENVIIGKIIPAGTGMARYRNLEPLAVNEIEVIEDSEEQEDTVEE.

4 residues coordinate Zn(2+): Cys60, Cys62, Cys75, and Cys78. Asp450, Asp452, and Asp454 together coordinate Mg(2+). Positions 819, 893, 900, and 903 each coordinate Zn(2+).

It belongs to the RNA polymerase beta' chain family. The RNAP catalytic core consists of 2 alpha, 1 beta, 1 beta' and 1 omega subunit. When a sigma factor is associated with the core the holoenzyme is formed, which can initiate transcription. Mg(2+) is required as a cofactor. Requires Zn(2+) as cofactor.

It catalyses the reaction RNA(n) + a ribonucleoside 5'-triphosphate = RNA(n+1) + diphosphate. Its function is as follows. DNA-dependent RNA polymerase catalyzes the transcription of DNA into RNA using the four ribonucleoside triphosphates as substrates. This is DNA-directed RNA polymerase subunit beta' from Streptococcus mutans serotype c (strain ATCC 700610 / UA159).